The sequence spans 259 residues: Hydroxyacylglutathione hydrolase (259 aa).

Zn(2+)-binding residues include histidine 56, histidine 58, aspartate 60, histidine 61, histidine 112, aspartate 133, and histidine 171.

Belongs to the metallo-beta-lactamase superfamily. Glyoxalase II family. In terms of assembly, monomer. The cofactor is Zn(2+).

The catalysed reaction is an S-(2-hydroxyacyl)glutathione + H2O = a 2-hydroxy carboxylate + glutathione + H(+). Its pathway is secondary metabolite metabolism; methylglyoxal degradation; (R)-lactate from methylglyoxal: step 2/2. Functionally, thiolesterase that catalyzes the hydrolysis of S-D-lactoyl-glutathione to form glutathione and D-lactic acid. This Pseudomonas putida (strain ATCC 700007 / DSM 6899 / JCM 31910 / BCRC 17059 / LMG 24140 / F1) protein is Hydroxyacylglutathione hydrolase.